The following is a 296-amino-acid chain: Tubulin polyglutamylase complex subunit 2 (296 aa).

Over residues 254-265 (SKNKILIPKKKG) the composition is skewed to basic residues. Residues 254-296 (SKNKILIPKKKGPVPPASGQKGPGPLPPPTSKPTTGSGNPVRK) form a disordered region. Residues 285 to 296 (KPTTGSGNPVRK) show a composition bias toward low complexity.

As to quaternary structure, part of the neuronal tubulin polyglutamylase complex which contains TPGS1, TPGS2, TTLL1, LRRC49 and NICN1. Interacts with CSTPP1 and LRRC49.

It is found in the cytoplasm. The protein localises to the cytoskeleton. It localises to the microtubule organizing center. Its subcellular location is the centrosome. The protein resides in the centriolar satellite. Its function is as follows. Subunit of the tubulin polyglutamylase complex (TPGC). The complex mediates cilia and flagella polyglutamylation which is essential for their biogenesis and motility. The sequence is that of Tubulin polyglutamylase complex subunit 2 (Tpgs2) from Mus musculus (Mouse).